A 760-amino-acid polypeptide reads, in one-letter code: Xaa-Pro dipeptidyl-peptidase (760 aa).

Active-site charge relay system residues include S349, D469, and H499.

Belongs to the peptidase S15 family. Homodimer.

It is found in the cytoplasm. It carries out the reaction Hydrolyzes Xaa-Pro-|- bonds to release unblocked, N-terminal dipeptides from substrates including Ala-Pro-|-p-nitroanilide and (sequentially) Tyr-Pro-|-Phe-Pro-|-Gly-Pro-|-Ile.. In terms of biological role, removes N-terminal dipeptides sequentially from polypeptides having unsubstituted N-termini provided that the penultimate residue is proline. This is Xaa-Pro dipeptidyl-peptidase from Streptococcus pyogenes serotype M28 (strain MGAS6180).